Reading from the N-terminus, the 248-residue chain is Small ribosomal subunit protein uS3 (248 aa).

Residues 38-106 enclose the KH type-2 domain; the sequence is IREYLEKGLD…MVALNILEVK (69 aa). The disordered stretch occupies residues 214–248; it reads SELNAPAQGRGRGDRNGRPRRGGQRRQRAQQKQEG. The segment covering 231–242 has biased composition (basic residues); that stretch reads RPRRGGQRRQRA.

This sequence belongs to the universal ribosomal protein uS3 family. In terms of assembly, part of the 30S ribosomal subunit. Forms a tight complex with proteins S10 and S14.

Functionally, binds the lower part of the 30S subunit head. Binds mRNA in the 70S ribosome, positioning it for translation. The protein is Small ribosomal subunit protein uS3 of Corynebacterium aurimucosum (strain ATCC 700975 / DSM 44827 / CIP 107346 / CN-1) (Corynebacterium nigricans).